The sequence spans 239 residues: Ribosomal RNA large subunit methyltransferase E (239 aa).

S-adenosyl-L-methionine contacts are provided by glycine 88, tryptophan 90, aspartate 111, aspartate 127, and aspartate 151. Lysine 191 acts as the Proton acceptor in catalysis.

This sequence belongs to the class I-like SAM-binding methyltransferase superfamily. RNA methyltransferase RlmE family.

The protein resides in the cytoplasm. It catalyses the reaction uridine(2552) in 23S rRNA + S-adenosyl-L-methionine = 2'-O-methyluridine(2552) in 23S rRNA + S-adenosyl-L-homocysteine + H(+). Specifically methylates the uridine in position 2552 of 23S rRNA at the 2'-O position of the ribose in the fully assembled 50S ribosomal subunit. The sequence is that of Ribosomal RNA large subunit methyltransferase E from Bartonella bacilliformis (strain ATCC 35685 / KC583 / Herrer 020/F12,63).